The primary structure comprises 511 residues: ATP synthase subunit alpha (511 aa).

ATP is bound at residue 169-176 (GDRQTGKT).

Belongs to the ATPase alpha/beta chains family. As to quaternary structure, F-type ATPases have 2 components, CF(1) - the catalytic core - and CF(0) - the membrane proton channel. CF(1) has five subunits: alpha(3), beta(3), gamma(1), delta(1), epsilon(1). CF(0) has three main subunits: a(1), b(2) and c(9-12). The alpha and beta chains form an alternating ring which encloses part of the gamma chain. CF(1) is attached to CF(0) by a central stalk formed by the gamma and epsilon chains, while a peripheral stalk is formed by the delta and b chains.

It is found in the cell inner membrane. It carries out the reaction ATP + H2O + 4 H(+)(in) = ADP + phosphate + 5 H(+)(out). In terms of biological role, produces ATP from ADP in the presence of a proton gradient across the membrane. The alpha chain is a regulatory subunit. This is ATP synthase subunit alpha from Bartonella quintana (strain Toulouse) (Rochalimaea quintana).